The sequence spans 515 residues: Probable cytochrome P450 4p3 (515 aa).

Heme is bound by residues Glu322 and Cys461.

It belongs to the cytochrome P450 family. Heme is required as a cofactor.

The protein localises to the endoplasmic reticulum membrane. The protein resides in the microsome membrane. Its function is as follows. May be involved in the metabolism of insect hormones and in the breakdown of synthetic insecticides. This is Probable cytochrome P450 4p3 (Cyp4p3) from Drosophila melanogaster (Fruit fly).